Here is a 189-residue protein sequence, read N- to C-terminus: dCTP deaminase (189 aa).

DCTP contacts are provided by residues 112-117 (KSTYAR), 136-138 (TLE), Gln-157, Tyr-171, and Gln-181. Glu-138 functions as the Proton donor/acceptor in the catalytic mechanism.

This sequence belongs to the dCTP deaminase family. In terms of assembly, homotrimer.

The enzyme catalyses dCTP + H2O + H(+) = dUTP + NH4(+). It functions in the pathway pyrimidine metabolism; dUMP biosynthesis; dUMP from dCTP (dUTP route): step 1/2. In terms of biological role, catalyzes the deamination of dCTP to dUTP. This is dCTP deaminase from Teredinibacter turnerae (strain ATCC 39867 / T7901).